Here is a 277-residue protein sequence, read N- to C-terminus: MLTKRALRTTDPYRRVLSRGFSVLNRPSPNYPGHVPLTTLERGALAVGSAIGSLINPRRADLIAALGEATATPYFIYRLRDVMLSDPTGRRILRNQPSINSQTLSVEYLRSLSPNTVGRTYVDWLDREGVGPDTRAKVQYIDDKECAYVMQRYRECHDFYHAITGLPVVVEGEIALKTFEFANTLLPMTGLSMFAVMRLKPEEKERFWKLHLPWAVRNGLASKAVINVYWEEQLERDVDELRKELGIEKPVDLREIRKIMRRQKKMAEEAAKTKKRY.

The transit peptide at 1 to 14 directs the protein to the mitochondrion; the sequence is MLTKRALRTTDPYR. Zn(2+) is bound by residues histidine 157, aspartate 158, histidine 161, and glutamate 173.

Belongs to the COQ4 family. As to quaternary structure, component of a multi-subunit COQ enzyme complex, composed of at least COQ3, COQ4, COQ5, COQ6, COQ7 and COQ9. Zn(2+) serves as cofactor.

The protein localises to the mitochondrion inner membrane. It catalyses the reaction a 4-hydroxy-3-methoxy-5-(all-trans-polyprenyl)benzoate + H(+) = a 2-methoxy-6-(all-trans-polyprenyl)phenol + CO2. The protein operates within cofactor biosynthesis; ubiquinone biosynthesis. Functionally, lyase that catalyzes the C1-decarboxylation of 4-hydroxy-3-methoxy-5-(all-trans-polyprenyl)benzoic acid into 2-methoxy-6-(all-trans-polyprenyl)phenol during ubiquinone biosynthesis. The protein is Ubiquinone biosynthesis protein COQ4, mitochondrial of Ajellomyces capsulatus (strain G186AR / H82 / ATCC MYA-2454 / RMSCC 2432) (Darling's disease fungus).